The chain runs to 178 residues: Crossover junction endodeoxyribonuclease RuvC (178 aa).

Residues Asp-11, Glu-71, and Asp-143 contribute to the active site. Residues Asp-11, Glu-71, and Asp-143 each contribute to the Mg(2+) site.

The protein belongs to the RuvC family. Homodimer which binds Holliday junction (HJ) DNA. The HJ becomes 2-fold symmetrical on binding to RuvC with unstacked arms; it has a different conformation from HJ DNA in complex with RuvA. In the full resolvosome a probable DNA-RuvA(4)-RuvB(12)-RuvC(2) complex forms which resolves the HJ. Mg(2+) serves as cofactor.

The protein localises to the cytoplasm. The catalysed reaction is Endonucleolytic cleavage at a junction such as a reciprocal single-stranded crossover between two homologous DNA duplexes (Holliday junction).. Functionally, the RuvA-RuvB-RuvC complex processes Holliday junction (HJ) DNA during genetic recombination and DNA repair. Endonuclease that resolves HJ intermediates. Cleaves cruciform DNA by making single-stranded nicks across the HJ at symmetrical positions within the homologous arms, yielding a 5'-phosphate and a 3'-hydroxyl group; requires a central core of homology in the junction. The consensus cleavage sequence is 5'-(A/T)TT(C/G)-3'. Cleavage occurs on the 3'-side of the TT dinucleotide at the point of strand exchange. HJ branch migration catalyzed by RuvA-RuvB allows RuvC to scan DNA until it finds its consensus sequence, where it cleaves and resolves the cruciform DNA. The protein is Crossover junction endodeoxyribonuclease RuvC of Neisseria meningitidis serogroup A / serotype 4A (strain DSM 15465 / Z2491).